Here is a 302-residue protein sequence, read N- to C-terminus: Quinolinate synthase (302 aa).

The iminosuccinate site is built by His25 and Ser42. Cys87 contacts [4Fe-4S] cluster. Residues 113–115 (YVN) and Ser130 contribute to the iminosuccinate site. Residue Cys172 coordinates [4Fe-4S] cluster. Iminosuccinate is bound by residues 198–200 (HPE) and Thr215. Cys260 lines the [4Fe-4S] cluster pocket.

This sequence belongs to the quinolinate synthase family. Type 2 subfamily. It depends on [4Fe-4S] cluster as a cofactor.

The protein localises to the cytoplasm. It catalyses the reaction iminosuccinate + dihydroxyacetone phosphate = quinolinate + phosphate + 2 H2O + H(+). Its pathway is cofactor biosynthesis; NAD(+) biosynthesis; quinolinate from iminoaspartate: step 1/1. Catalyzes the condensation of iminoaspartate with dihydroxyacetone phosphate to form quinolinate. In Methanoregula boonei (strain DSM 21154 / JCM 14090 / 6A8), this protein is Quinolinate synthase.